The chain runs to 1187 residues: DNA-directed RNA polymerase subunit beta (1187 aa).

Residues Lys1150–Gln1187 are disordered. Over residues Ala1173–Gln1187 the composition is skewed to basic and acidic residues.

This sequence belongs to the RNA polymerase beta chain family. The RNAP catalytic core consists of 2 alpha, 1 beta, 1 beta' and 1 omega subunit. When a sigma factor is associated with the core the holoenzyme is formed, which can initiate transcription.

It catalyses the reaction RNA(n) + a ribonucleoside 5'-triphosphate = RNA(n+1) + diphosphate. Functionally, DNA-dependent RNA polymerase catalyzes the transcription of DNA into RNA using the four ribonucleoside triphosphates as substrates. This chain is DNA-directed RNA polymerase subunit beta, found in Bifidobacterium longum (strain NCC 2705).